A 131-amino-acid polypeptide reads, in one-letter code: Large-conductance mechanosensitive channel (131 aa).

3 helical membrane-spanning segments follow: residues 8–28 (FAIR…GAFG), 30–50 (IVSS…LGGI), and 67–87 (GAFI…FLFV).

Belongs to the MscL family. Homopentamer.

It is found in the cell membrane. Channel that opens in response to stretch forces in the membrane lipid bilayer. May participate in the regulation of osmotic pressure changes within the cell. This Geobacillus thermodenitrificans (strain NG80-2) protein is Large-conductance mechanosensitive channel.